A 99-amino-acid polypeptide reads, in one-letter code: Integration host factor subunit alpha (99 aa).

This sequence belongs to the bacterial histone-like protein family. Heterodimer of an alpha and a beta chain.

Its function is as follows. This protein is one of the two subunits of integration host factor, a specific DNA-binding protein that functions in genetic recombination as well as in transcriptional and translational control. In Enterobacter sp. (strain 638), this protein is Integration host factor subunit alpha.